Here is a 286-residue protein sequence, read N- to C-terminus: Soluble epoxide hydrolase (286 aa).

The 98-residue stretch at 26 to 123 (YPLVLLHGWP…DLVERLFILD (98 aa)) folds into the AB hydrolase-1 domain. D99 serves as the catalytic Nucleophile. Y209 acts as the Proton donor in catalysis. The active-site Proton acceptor is H264.

This sequence belongs to the AB hydrolase superfamily. Epoxide hydrolase family. Homotetramer.

The protein resides in the cytoplasm. The protein localises to the cell membrane. It carries out the reaction an epoxide + H2O = an ethanediol. Its function is as follows. Involved in catabolic degradation of epoxides. Shows highest activity towards C6 and C7 carbocyclic epoxides. Also active towards linear 1,2-epoxyalkanes. The polypeptide is Soluble epoxide hydrolase (Corynebacterium sp. (strain C12)).